The sequence spans 528 residues: Phosphoenolpyruvate carboxykinase (ATP) (528 aa).

Substrate-binding residues include R56, Y192, and K198. Residues K198, H217, and 233–241 (GLSGTGKTT) each bind ATP. Mn(2+)-binding residues include K198 and H217. D254 contacts Mn(2+). The ATP site is built by E282, R319, and T444. R319 contacts substrate.

The protein belongs to the phosphoenolpyruvate carboxykinase (ATP) family. Mn(2+) is required as a cofactor.

It is found in the cytoplasm. It catalyses the reaction oxaloacetate + ATP = phosphoenolpyruvate + ADP + CO2. It participates in carbohydrate biosynthesis; gluconeogenesis. Its function is as follows. Involved in the gluconeogenesis. Catalyzes the conversion of oxaloacetate (OAA) to phosphoenolpyruvate (PEP) through direct phosphoryl transfer between the nucleoside triphosphate and OAA. The protein is Phosphoenolpyruvate carboxykinase (ATP) of Geobacillus thermodenitrificans (strain NG80-2).